Consider the following 295-residue polypeptide: Shikimate dehydrogenase (NADP(+)) (295 aa).

Shikimate is bound by residues 18–20 and Thr-66; that span reads SRS. Catalysis depends on Lys-70, which acts as the Proton acceptor. Shikimate is bound by residues Asn-91 and Asp-106. Residues 130–134 and Met-235 contribute to the NADP(+) site; that span reads GNGGA. Tyr-237 is a binding site for shikimate. Gly-258 lines the NADP(+) pocket.

The protein belongs to the shikimate dehydrogenase family. As to quaternary structure, homodimer.

It catalyses the reaction shikimate + NADP(+) = 3-dehydroshikimate + NADPH + H(+). The protein operates within metabolic intermediate biosynthesis; chorismate biosynthesis; chorismate from D-erythrose 4-phosphate and phosphoenolpyruvate: step 4/7. In terms of biological role, involved in the biosynthesis of the chorismate, which leads to the biosynthesis of aromatic amino acids. Catalyzes the reversible NADPH linked reduction of 3-dehydroshikimate (DHSA) to yield shikimate (SA). The sequence is that of Shikimate dehydrogenase (NADP(+)) from Chlorobium phaeobacteroides (strain DSM 266 / SMG 266 / 2430).